A 398-amino-acid polypeptide reads, in one-letter code: Probable beta-1,3-galactosyltransferase 5 (398 aa).

The chain crosses the membrane as a helical; Signal-anchor for type II membrane protein span at residues 11-31 (LTMTWVPLLCISCFFLGAIFT). N-linked (GlcNAc...) asparagine glycosylation is found at Asn110, Asn115, and Asn206.

It belongs to the glycosyltransferase 31 family. Mn(2+) is required as a cofactor.

The protein localises to the golgi apparatus membrane. Its pathway is protein modification; protein glycosylation. Beta-1,3-galactosyltransferase that transfers galactose from UDP-galactose to substrates with a terminal glycosyl residue. The chain is Probable beta-1,3-galactosyltransferase 5 (B3GALT5) from Arabidopsis thaliana (Mouse-ear cress).